Here is a 464-residue protein sequence, read N- to C-terminus: Soluble pyridine nucleotide transhydrogenase (464 aa).

An FAD-binding site is contributed by 35-44 (DSRRQVGGNC).

Belongs to the class-I pyridine nucleotide-disulfide oxidoreductase family. It depends on FAD as a cofactor.

It localises to the cytoplasm. The enzyme catalyses NAD(+) + NADPH = NADH + NADP(+). Its function is as follows. Conversion of NADPH, generated by peripheral catabolic pathways, to NADH, which can enter the respiratory chain for energy generation. This chain is Soluble pyridine nucleotide transhydrogenase, found in Pseudomonas putida (strain W619).